The sequence spans 935 residues: Protein translocase subunit SecA (935 aa).

Residues glutamine 86, 104 to 108, and aspartate 494 contribute to the ATP site; that span reads GEGKT. Residues 879–935 are disordered; the sequence is EQAATARAQQHSSAAVAAPEQGATQRGAFGQRVSAADDAAPANRAERRAQKKPTKRH.

The protein belongs to the SecA family. Monomer and homodimer. Part of the essential Sec protein translocation apparatus which comprises SecA, SecYEG and auxiliary proteins SecDF. Other proteins may also be involved.

It localises to the cell membrane. The protein resides in the cytoplasm. The catalysed reaction is ATP + H2O + cellular proteinSide 1 = ADP + phosphate + cellular proteinSide 2.. Functionally, part of the Sec protein translocase complex. Interacts with the SecYEG preprotein conducting channel. Has a central role in coupling the hydrolysis of ATP to the transfer of proteins into and across the cell membrane, serving as an ATP-driven molecular motor driving the stepwise translocation of polypeptide chains across the membrane. In Leifsonia xyli subsp. xyli (strain CTCB07), this protein is Protein translocase subunit SecA.